A 245-amino-acid polypeptide reads, in one-letter code: 1-(5-phosphoribosyl)-5-[(5-phosphoribosylamino)methylideneamino] imidazole-4-carboxamide isomerase (245 aa).

The active-site Proton acceptor is Asp-8. Asp-129 (proton donor) is an active-site residue.

The protein belongs to the HisA/HisF family.

It localises to the cytoplasm. It catalyses the reaction 1-(5-phospho-beta-D-ribosyl)-5-[(5-phospho-beta-D-ribosylamino)methylideneamino]imidazole-4-carboxamide = 5-[(5-phospho-1-deoxy-D-ribulos-1-ylimino)methylamino]-1-(5-phospho-beta-D-ribosyl)imidazole-4-carboxamide. The protein operates within amino-acid biosynthesis; L-histidine biosynthesis; L-histidine from 5-phospho-alpha-D-ribose 1-diphosphate: step 4/9. This chain is 1-(5-phosphoribosyl)-5-[(5-phosphoribosylamino)methylideneamino] imidazole-4-carboxamide isomerase, found in Rhodopseudomonas palustris (strain BisB5).